The primary structure comprises 532 residues: Membrane protein insertase YidC (532 aa).

Helical transmembrane passes span 7 to 27, 336 to 356, 413 to 433, 450 to 470, and 492 to 512; these read FFIF…QSQM, LTIL…ITFI, GGFL…YMLI, LSSQ…MFFI, and PVIF…YYII.

This sequence belongs to the OXA1/ALB3/YidC family. Type 1 subfamily. Interacts with the Sec translocase complex via SecD. Specifically interacts with transmembrane segments of nascent integral membrane proteins during membrane integration.

The protein resides in the cell membrane. Functionally, required for the insertion and/or proper folding and/or complex formation of integral membrane proteins into the membrane. Involved in integration of membrane proteins that insert both dependently and independently of the Sec translocase complex, as well as at least some lipoproteins. Aids folding of multispanning membrane proteins. In Buchnera aphidicola subsp. Acyrthosiphon pisum (strain APS) (Acyrthosiphon pisum symbiotic bacterium), this protein is Membrane protein insertase YidC.